The chain runs to 79 residues: CDC42 small effector protein 1-A (79 aa).

Residues C10 and C11 are each lipidated (S-palmitoyl cysteine). Residues 30 to 43 (IGEPMNFVHLTHVG) form the CRIB domain.

This sequence belongs to the CDC42SE/SPEC family.

It is found in the cytoplasm. It localises to the cytoskeleton. The protein resides in the cell membrane. In terms of biological role, probably involved in the organization of the actin cytoskeleton by acting downstream of CDC42, inducing actin filament assembly. This chain is CDC42 small effector protein 1-A (cdc42se1-a), found in Xenopus laevis (African clawed frog).